Reading from the N-terminus, the 60-residue chain is Large ribosomal subunit protein bL32 (60 aa).

The disordered stretch occupies residues 1 to 60 (MAVQQNKKTPSKRGMHRSHDFLVAPQLSVEQTTGETHMRHHISPNGFYRGRKVLKTKNDE). Residues 49–60 (RGRKVLKTKNDE) are compositionally biased toward basic residues.

It belongs to the bacterial ribosomal protein bL32 family.

In Herminiimonas arsenicoxydans, this protein is Large ribosomal subunit protein bL32.